Consider the following 130-residue polypeptide: Small ribosomal subunit protein uS8 (130 aa).

The protein belongs to the universal ribosomal protein uS8 family. As to quaternary structure, part of the 30S ribosomal subunit. Contacts proteins S5 and S12.

One of the primary rRNA binding proteins, it binds directly to 16S rRNA central domain where it helps coordinate assembly of the platform of the 30S subunit. This is Small ribosomal subunit protein uS8 from Marinomonas sp. (strain MWYL1).